We begin with the raw amino-acid sequence, 226 residues long: Putative type II restriction enzyme MjaVIP (226 aa).

The protein belongs to the BsaWI type II restriction endonuclease family.

It carries out the reaction Endonucleolytic cleavage of DNA to give specific double-stranded fragments with terminal 5'-phosphates.. Functionally, a P subtype restriction enzyme that recognizes the double-stranded sequence 5'-CCGG-3'; the cleavage site is unknown. This is Putative type II restriction enzyme MjaVIP (mjaVIRP) from Methanocaldococcus jannaschii (strain ATCC 43067 / DSM 2661 / JAL-1 / JCM 10045 / NBRC 100440) (Methanococcus jannaschii).